Consider the following 210-residue polypeptide: RNA chaperone ProQ (210 aa).

The tract at residues 118-146 (KAAKPEKKRPARRVAAKGQHAKETTTNKA) is disordered. A compositionally biased stretch (basic residues) spans 123 to 132 (EKKRPARRVA).

This sequence belongs to the ProQ family.

It is found in the cytoplasm. Its function is as follows. RNA chaperone with significant RNA binding, RNA strand exchange and RNA duplexing activities. In Pasteurella multocida (strain Pm70), this protein is RNA chaperone ProQ.